The primary structure comprises 970 residues: Unconventional myosin-XIX (970 aa).

A Myosin motor domain is found at 35-758 (YKLDDLTRVN…MLELLECGRA (724 aa)). An ATP-binding site is contributed by 132 to 139 (GESGAGKT). Residues 602–624 (LEQLLQVLHSTTPHYIRCIKPNS) are actin-binding. S685 is modified (phosphoserine). IQ domains lie at 759–779 (RVLE…RHRE) and 783–812 (QWRA…AATV). The myMOMA region stretch occupies residues 824 to 970 (MACLAAKELD…VTSSAFTGLG (147 aa)).

The protein belongs to the TRAFAC class myosin-kinesin ATPase superfamily. Myosin family. As to quaternary structure, myosin is a hexamer of 2 heavy chains and 4 light chains: interacts with myosin light chains MYL9 and MYL12B. Widely expressed in multiple tissues and cell lines.

It is found in the mitochondrion outer membrane. Its subcellular location is the cytoplasm. The protein localises to the cytoskeleton. Actin-based motor molecule with ATPase activity that localizes to the mitochondrion outer membrane. Motor protein that moves towards the plus-end of actin filaments. Required for mitochondrial inheritance during mitosis. May be involved in mitochondrial transport or positioning. This Homo sapiens (Human) protein is Unconventional myosin-XIX.